The following is a 650-amino-acid chain: Acetyl-coenzyme A synthetase (650 aa).

CoA is bound by residues 191–194, threonine 311, and asparagine 335; that span reads RGGR. Residues 387–389, 411–416, aspartate 500, and arginine 515 each bind ATP; these read GEP and DTWWQT. Serine 523 provides a ligand contact to CoA. Arginine 526 lines the ATP pocket. The Mg(2+) site is built by valine 537, histidine 539, and valine 542. Arginine 584 lines the CoA pocket. Lysine 609 is subject to N6-acetyllysine.

Belongs to the ATP-dependent AMP-binding enzyme family. Mg(2+) is required as a cofactor. Acetylated. Deacetylation by the SIR2-homolog deacetylase activates the enzyme.

The enzyme catalyses acetate + ATP + CoA = acetyl-CoA + AMP + diphosphate. In terms of biological role, catalyzes the conversion of acetate into acetyl-CoA (AcCoA), an essential intermediate at the junction of anabolic and catabolic pathways. AcsA undergoes a two-step reaction. In the first half reaction, AcsA combines acetate with ATP to form acetyl-adenylate (AcAMP) intermediate. In the second half reaction, it can then transfer the acetyl group from AcAMP to the sulfhydryl group of CoA, forming the product AcCoA. The chain is Acetyl-coenzyme A synthetase from Shewanella baltica (strain OS155 / ATCC BAA-1091).